A 210-amino-acid chain; its full sequence is Putative tyrosine-protein phosphatase OCA1 (210 aa).

The Tyrosine-protein phosphatase domain maps to 44–204 (NFCPVERYLY…EIDREKAPNW (161 aa)). The active-site Phosphocysteine intermediate is Cys-140.

It belongs to the protein-tyrosine phosphatase family.

It is found in the cytoplasm. The catalysed reaction is O-phospho-L-tyrosyl-[protein] + H2O = L-tyrosyl-[protein] + phosphate. Functionally, putative tyrosine-protein phosphatase required for protection against superoxide stress. This chain is Putative tyrosine-protein phosphatase OCA1 (OCA1), found in Kluyveromyces lactis (strain ATCC 8585 / CBS 2359 / DSM 70799 / NBRC 1267 / NRRL Y-1140 / WM37) (Yeast).